A 358-amino-acid polypeptide reads, in one-letter code: 5-amino-6-(D-ribitylamino)uracil--L-tyrosine 4-hydroxyphenyl transferase 2 (358 aa).

The Radical SAM core domain occupies 45 to 292 (VTFVKNTNIE…ESIKNIQAPR (248 aa)). Positions 59, 63, and 66 each coordinate [4Fe-4S] cluster.

The protein belongs to the radical SAM superfamily. CofH family. As to quaternary structure, consists of two subunits, CofG and CofH. It depends on [4Fe-4S] cluster as a cofactor.

It catalyses the reaction 5-amino-6-(D-ribitylamino)uracil + L-tyrosine + S-adenosyl-L-methionine = 5-amino-5-(4-hydroxybenzyl)-6-(D-ribitylimino)-5,6-dihydrouracil + 2-iminoacetate + 5'-deoxyadenosine + L-methionine + H(+). It functions in the pathway cofactor biosynthesis; coenzyme F0 biosynthesis. Its function is as follows. Catalyzes the radical-mediated synthesis of 5-amino-5-(4-hydroxybenzyl)-6-(D-ribitylimino)-5,6-dihydrouracil from 5-amino-6-(D-ribitylamino)uracil and L-tyrosine. The protein is 5-amino-6-(D-ribitylamino)uracil--L-tyrosine 4-hydroxyphenyl transferase 2 of Methanococcus maripaludis (strain DSM 14266 / JCM 13030 / NBRC 101832 / S2 / LL).